The primary structure comprises 186 residues: MLALINRILEWFKSIFWKEEMELTLVGLQFSGKTTFVNVIASGQFAEDMIPTVGFNMRKITRGNVTIKVWDIGGQPRFRSMWERYCRGVNAIVYMVDAADLDKLEASRNELHSLLDKPQLAGIPVLVLGNKRDLPGALDETGLIERMNLSSIQDREICCYSISCKEKDNIDITLQWLIQHSKSQSR.

An intramembrane region (note=Mediates targeting to membranes) is located at residues 1 to 19 (MLALINRILEWFKSIFWKE). Residues 29–35 (QFSGKTT), 71–75 (DIGGQ), and 130–133 (NKRD) each bind GTP.

It belongs to the small GTPase superfamily. Arf family. Interacts with tubulin. Interacts (in GTP-bound form) with Rilpl. Interacts with unc-104. As to expression, expressed throughout development, from embryo to adult stage, in different tissues such as larval motor neurons, salivary glands, testis and ovaries (at protein level).

The protein resides in the lysosome membrane. It localises to the synapse. It is found in the cell projection. Its subcellular location is the axon. The protein localises to the perikaryon. Its function is as follows. Required for normal functioning of the late endocytic pathway including lysosome motility and late endosome-lysosome fusion. Not required for the delivery of lysosomal membrane protein-containing vesicles to late endosomes. In larval motor neurons, mediates the anterograde axonal long-range transport of presynaptic lysosome-related vesicles required for presynaptic biogenesis and synaptic function. Acts downstream of Rab2 during presynaptic precursor vesicle biogenesis. Essential role in chromosome segregation. The chain is ADP-ribosylation factor-like protein 8 from Drosophila melanogaster (Fruit fly).